Here is a 658-residue protein sequence, read N- to C-terminus: ATP-dependent RNA helicase DDX3Y (658 aa).

Basic and acidic residues predominate over residues Met-1–Pro-10. Residues Met-1–Ser-141 form a disordered region. The residue at position 2 (Ser-2) is an N-acetylserine. The span at Gln-15–Ser-34 shows a compositional bias: polar residues. The span at Arg-44–Ala-68 shows a compositional bias: basic and acidic residues. Lys-55 carries the N6-acetyllysine modification. Phosphoserine occurs at positions 81, 85, and 89. Residues Gly-93 to Lys-128 are compositionally biased toward basic and acidic residues. Omega-N-methylarginine is present on Arg-100. Residue Ser-101 is modified to Phosphoserine. Tyr-103 carries the phosphotyrosine modification. Residue Arg-109 is modified to Omega-N-methylarginine. Ser-129 and Ser-181 each carry phosphoserine. The Q motif motif lies at Glu-178 to Lys-206. Tyr-198–Gln-205 is an ATP binding site. Residues Ile-209–Leu-401 enclose the Helicase ATP-binding domain. Lys-213 participates in a covalent cross-link: Glycyl lysine isopeptide (Lys-Gly) (interchain with G-Cter in SUMO2). Residue Ala-222–Thr-229 coordinates ATP. The short motif at Asp-345 to Asp-348 is the DEAD box element. A Helicase C-terminal domain is found at Asn-412–Ala-573. A Phosphoserine modification is found at Ser-454. Residue Arg-588 is modified to Omega-N-methylarginine. 2 positions are modified to phosphoserine: Ser-590 and Ser-601. The interval Asp-597 to Gly-625 is disordered. A compositionally biased stretch (low complexity) spans Ser-601–Ser-619. Omega-N-methylarginine occurs at positions 613 and 628.

Belongs to the DEAD box helicase family. DDX3/DED1 subfamily. In terms of assembly, may interact with TDRD3.

Its subcellular location is the cytoplasm. It localises to the nucleus. The enzyme catalyses ATP + H2O = ADP + phosphate + H(+). In terms of biological role, probable ATP-dependent RNA helicase. May play a role in spermatogenesis. In Pongo abelii (Sumatran orangutan), this protein is ATP-dependent RNA helicase DDX3Y (DDX3Y).